Here is a 364-residue protein sequence, read N- to C-terminus: D-alanine--D-alanine ligase A (364 aa).

One can recognise an ATP-grasp domain in the interval 145–348; the sequence is KRLLRDAGLN…YTDLISRLIE (204 aa). ATP is bound at residue 175 to 230; it reads ESRLGLPLFVKPANQGSSVGVSKVANEAQYQQAVALAFEFDHKVVVEQGIKGREIE. 3 residues coordinate Mg(2+): Asp302, Glu315, and Asn317.

It belongs to the D-alanine--D-alanine ligase family. It depends on Mg(2+) as a cofactor. The cofactor is Mn(2+).

The protein localises to the cytoplasm. It catalyses the reaction 2 D-alanine + ATP = D-alanyl-D-alanine + ADP + phosphate + H(+). The protein operates within cell wall biogenesis; peptidoglycan biosynthesis. In terms of biological role, cell wall formation. This is D-alanine--D-alanine ligase A (ddlA) from Salmonella typhi.